A 746-amino-acid polypeptide reads, in one-letter code: NAD(P)H-quinone oxidoreductase subunit 5, chloroplastic (746 aa).

16 helical membrane passes run 9 to 29 (WIIPFIPLPVPILLGVGLLLF), 40 to 60 (WTFLSIFLLSIVMIFSIYLSI), 89 to 109 (IDPLTSIMSILITTVGILVLI), 125 to 145 (FAYMGFFNTSMLGLVTSSNLI), 147 to 167 (VYFFWELVGMCSYLLIGFWFT), 185 to 205 (GDFGLLLGILGLYWITGSFEF), 221 to 241 (VNLLFLTLCAFLLFVGPIAKS), 258 to 278 (TPISALIHAATMVAAGIFLVA), 280 to 300 (LLPLFIVIPSIMYIISLIGII), 327 to 347 (LGYMMLALGMGSYRSALFHLI), 354 to 374 (ALLFLGSGSIIHSMEAIVGYS), 396 to 416 (TAFLIGTLSLCGIPPLACFWS), 425 to 445 (LLFSPIFAIIACSTAGLTAFY), 547 to 567 (ILFPMLILVLFTLFIGAIGIP), 608 to 628 (FSVSIAFFGIFIAYCLYKPFY), and 723 to 743 (YLFLYLSYVLIFLMILFFFYF).

It belongs to the complex I subunit 5 family. As to quaternary structure, NDH is composed of at least 16 different subunits, 5 of which are encoded in the nucleus.

It is found in the plastid. The protein localises to the chloroplast thylakoid membrane. The enzyme catalyses a plastoquinone + NADH + (n+1) H(+)(in) = a plastoquinol + NAD(+) + n H(+)(out). The catalysed reaction is a plastoquinone + NADPH + (n+1) H(+)(in) = a plastoquinol + NADP(+) + n H(+)(out). Functionally, NDH shuttles electrons from NAD(P)H:plastoquinone, via FMN and iron-sulfur (Fe-S) centers, to quinones in the photosynthetic chain and possibly in a chloroplast respiratory chain. The immediate electron acceptor for the enzyme in this species is believed to be plastoquinone. Couples the redox reaction to proton translocation, and thus conserves the redox energy in a proton gradient. The polypeptide is NAD(P)H-quinone oxidoreductase subunit 5, chloroplastic (ndhF) (Arabidopsis thaliana (Mouse-ear cress)).